A 207-amino-acid polypeptide reads, in one-letter code: ATP-dependent Clp protease proteolytic subunit (207 aa).

The Nucleophile role is filled by Ser-111. His-136 is a catalytic residue.

The protein belongs to the peptidase S14 family. As to quaternary structure, fourteen ClpP subunits assemble into 2 heptameric rings which stack back to back to give a disk-like structure with a central cavity, resembling the structure of eukaryotic proteasomes.

The protein resides in the cytoplasm. The enzyme catalyses Hydrolysis of proteins to small peptides in the presence of ATP and magnesium. alpha-casein is the usual test substrate. In the absence of ATP, only oligopeptides shorter than five residues are hydrolyzed (such as succinyl-Leu-Tyr-|-NHMec, and Leu-Tyr-Leu-|-Tyr-Trp, in which cleavage of the -Tyr-|-Leu- and -Tyr-|-Trp bonds also occurs).. Cleaves peptides in various proteins in a process that requires ATP hydrolysis. Has a chymotrypsin-like activity. Plays a major role in the degradation of misfolded proteins. The sequence is that of ATP-dependent Clp protease proteolytic subunit from Aeromonas salmonicida (strain A449).